Consider the following 81-residue polypeptide: ATP synthase subunit c (81 aa).

2 helical membrane passes run Ala-7–Gly-27 and Leu-57–Ala-77.

This sequence belongs to the ATPase C chain family. In terms of assembly, F-type ATPases have 2 components, F(1) - the catalytic core - and F(0) - the membrane proton channel. F(1) has five subunits: alpha(3), beta(3), gamma(1), delta(1), epsilon(1). F(0) has four main subunits: a(1), b(1), b'(1) and c(10-14). The alpha and beta chains form an alternating ring which encloses part of the gamma chain. F(1) is attached to F(0) by a central stalk formed by the gamma and epsilon chains, while a peripheral stalk is formed by the delta, b and b' chains.

The protein resides in the cellular thylakoid membrane. F(1)F(0) ATP synthase produces ATP from ADP in the presence of a proton or sodium gradient. F-type ATPases consist of two structural domains, F(1) containing the extramembraneous catalytic core and F(0) containing the membrane proton channel, linked together by a central stalk and a peripheral stalk. During catalysis, ATP synthesis in the catalytic domain of F(1) is coupled via a rotary mechanism of the central stalk subunits to proton translocation. In terms of biological role, key component of the F(0) channel; it plays a direct role in translocation across the membrane. A homomeric c-ring of between 10-14 subunits forms the central stalk rotor element with the F(1) delta and epsilon subunits. This Synechococcus sp. (strain CC9902) protein is ATP synthase subunit c.